The sequence spans 133 residues: UPF0225 protein BPP1723 (133 aa).

This sequence belongs to the UPF0225 family.

The polypeptide is UPF0225 protein BPP1723 (Bordetella parapertussis (strain 12822 / ATCC BAA-587 / NCTC 13253)).